The following is a 23-amino-acid chain: GLLQTIKEKLKEFAGGVVTGVQS.

This sequence belongs to the frog skin active peptide (FSAP) family. Aurein subfamily. In terms of tissue distribution, expressed by the skin dorsal glands.

It is found in the secreted. Functionally, has no antimicrobial or anticancer activity. In Ranoidea aurea (Green and golden bell frog), this protein is Aurein-4.2.